The sequence spans 510 residues: Inositol-3-phosphate synthase (510 aa).

Residues glycine 70, glycine 71, asparagine 72, asparagine 73, aspartate 143, isoleucine 180, glutamine 190, arginine 193, threonine 230, alanine 231, asparagine 232, threonine 233, glycine 281, serine 282, aspartate 306, serine 309, asparagine 340, asparagine 341, aspartate 342, lysine 355, glycine 393, aspartate 394, aspartate 422, and serine 423 each coordinate NAD(+).

The protein belongs to the myo-inositol 1-phosphate synthase family. It depends on NAD(+) as a cofactor.

The protein resides in the cytoplasm. It is found in the cytosol. Its subcellular location is the nucleus. It catalyses the reaction D-glucose 6-phosphate = 1D-myo-inositol 3-phosphate. It functions in the pathway polyol metabolism; myo-inositol biosynthesis; myo-inositol from D-glucose 6-phosphate: step 1/2. Functionally, key enzyme in myo-inositol biosynthesis pathway that catalyzes the conversion of glucose 6-phosphate to 1-myo-inositol 1-phosphate in a NAD-dependent manner. In Sesamum indicum (Oriental sesame), this protein is Inositol-3-phosphate synthase.